A 141-amino-acid chain; its full sequence is Large ribosomal subunit protein uL11 (141 aa).

It belongs to the universal ribosomal protein uL11 family. As to quaternary structure, part of the ribosomal stalk of the 50S ribosomal subunit. Interacts with L10 and the large rRNA to form the base of the stalk. L10 forms an elongated spine to which L12 dimers bind in a sequential fashion forming a multimeric L10(L12)X complex. In terms of processing, one or more lysine residues are methylated.

Forms part of the ribosomal stalk which helps the ribosome interact with GTP-bound translation factors. This is Large ribosomal subunit protein uL11 from Synechococcus sp. (strain WH7803).